The primary structure comprises 483 residues: Glutamyl-tRNA(Gln) amidotransferase subunit A (483 aa).

Residues Lys-76 and Ser-151 each act as charge relay system in the active site. The active-site Acyl-ester intermediate is the Ser-175.

This sequence belongs to the amidase family. GatA subfamily. As to quaternary structure, heterotrimer of A, B and C subunits.

The catalysed reaction is L-glutamyl-tRNA(Gln) + L-glutamine + ATP + H2O = L-glutaminyl-tRNA(Gln) + L-glutamate + ADP + phosphate + H(+). Allows the formation of correctly charged Gln-tRNA(Gln) through the transamidation of misacylated Glu-tRNA(Gln) in organisms which lack glutaminyl-tRNA synthetase. The reaction takes place in the presence of glutamine and ATP through an activated gamma-phospho-Glu-tRNA(Gln). This Pseudomonas entomophila (strain L48) protein is Glutamyl-tRNA(Gln) amidotransferase subunit A.